The primary structure comprises 268 residues: Transcription initiation factor TFIID subunit 14b (268 aa).

Residues 1-20 are compositionally biased toward polar residues; the sequence is MTNSSSSKKQAQDQPETSEP. The interval 1–36 is disordered; the sequence is MTNSSSSKKQAQDQPETSEPTLKSLKTKMTKSDEKQ. Residues 38–182 enclose the YEATS domain; that stretch reads KLKDIEISVP…ESFLARVQNH (145 aa). A coiled-coil region spans residues 229–263; it reads DELLQLAAARQQVQAHIAKLRRQISLLEGQNQTVK.

It belongs to the YAF9 family. Component of the TFIID complex. TFIID is composed of TATA binding protein (TBP) and a number of TBP-associated factors (TAFs) whose MWs range from 14-217 kDa. Interacts with TAF1, TAF4B and TAF12B. Component of the SWR1 chromatin-remodeling complex. Interacts with FLX, a component of the transcription activator complex FRI-C. Interacts with SWC4, and with EAF1A and EAF1B (via HSA domain). In terms of tissue distribution, expressed in roots, leaves, inflorescence and flowering tissues.

The protein localises to the cytoplasm. It is found in the nucleus. In terms of biological role, negative regulator of flowering controlling the H4K5 acetylation levels in the FLC and FT chromatin. Positively regulates FLC expression. Component of the transcription factor IID (TFIID) complex that is essential for mediating regulation of RNA polymerase transcription. Component of the SWR1 complex which mediates the ATP-dependent exchange of histone H2A for the H2A variant HZT1 leading to transcriptional regulation of selected genes by chromatin remodeling. Component of a NuA4 histone acetyltransferase complex which is involved in transcriptional activation of selected genes principally by acetylation of nucleosomal histones H4 and H2A. In Arabidopsis thaliana (Mouse-ear cress), this protein is Transcription initiation factor TFIID subunit 14b.